Consider the following 210-residue polypeptide: Small ribosomal subunit protein uS3 (210 aa).

The region spanning Leu38–Arg106 is the KH type-2 domain.

It belongs to the universal ribosomal protein uS3 family. As to quaternary structure, part of the 30S ribosomal subunit. Forms a tight complex with proteins S10 and S14.

Its function is as follows. Binds the lower part of the 30S subunit head. Binds mRNA in the 70S ribosome, positioning it for translation. This chain is Small ribosomal subunit protein uS3, found in Geotalea daltonii (strain DSM 22248 / JCM 15807 / FRC-32) (Geobacter daltonii).